Consider the following 704-residue polypeptide: Protein kinase C-like 1 (704 aa).

Phosphothreonine; by autocatalysis is present on residues Thr89 and Thr139. Phorbol-ester/DAG-type zinc fingers lie at residues 165-215 and 237-287; these read GHQF…IMQC and PHRF…SNLC. Thr324 bears the Phosphothreonine; by autocatalysis mark. The 260-residue stretch at 375–634 folds into the Protein kinase domain; the sequence is FNLLKVLGKG…DGPIRQHCFF (260 aa). ATP contacts are provided by residues 381–389 and Lys404; that span reads LGKGSFGKV. Catalysis depends on Asp499, which acts as the Proton acceptor. Residues 635-704 form the AGC-kinase C-terminal domain; it reads RGVDWKRFEN…FSYTNPHFSK (70 aa).

This sequence belongs to the protein kinase superfamily. AGC Ser/Thr protein kinase family. PKC subfamily.

The enzyme catalyses L-seryl-[protein] + ATP = O-phospho-L-seryl-[protein] + ADP + H(+). The catalysed reaction is L-threonyl-[protein] + ATP = O-phospho-L-threonyl-[protein] + ADP + H(+). Diacylglycerol (DAG)-dependent serine/threonine-protein kinase that phosphorylates a range of cellular proteins. Phosphorylates mlk-1, a component of the JNK pathway. Involved in axon regeneration after injury probably by activating the JNK pathway. Plays a role in resistance to fungal infection and in wound healing by promoting expression of antimicrobial peptide nlp-29 in the epidermis downstream of gpa-12 and plc-3 and upstream of tir-1-p38-like pathway. Probably by regulating neuronal transmission in ALA neurons, regulates the decrease in pharyngeal pumping during the quiescent state that precedes each larval molt, downstream of lin-3 and receptor let-23 and phospholipase plc-3. The protein is Protein kinase C-like 1 (tpa-1) of Caenorhabditis elegans.